Consider the following 148-residue polypeptide: Small ribosomal subunit protein bS6 (148 aa).

Positions 96-148 (HEEGQSAMLTRRDDRRERDGDDRPRRREGGFDRGDRGDRGPRRPRDTEAGEGA) are disordered.

Belongs to the bacterial ribosomal protein bS6 family.

In terms of biological role, binds together with bS18 to 16S ribosomal RNA. The protein is Small ribosomal subunit protein bS6 of Brucella canis (strain ATCC 23365 / NCTC 10854 / RM-666).